Here is a 119-residue protein sequence, read N- to C-terminus: Integration host factor subunit beta (119 aa).

A disordered region spans residues 91–119 (DLVGNDQGDDSSNGSSDPLQSVMDMHAMH). A compositionally biased stretch (low complexity) spans 94 to 107 (GNDQGDDSSNGSSD).

It belongs to the bacterial histone-like protein family. Heterodimer of an alpha and a beta chain.

This protein is one of the two subunits of integration host factor, a specific DNA-binding protein that functions in genetic recombination as well as in transcriptional and translational control. In Bordetella parapertussis (strain 12822 / ATCC BAA-587 / NCTC 13253), this protein is Integration host factor subunit beta.